The sequence spans 265 residues: Aquaporin-5 (265 aa).

The Cytoplasmic segment spans residues 1 to 12; it reads MKKEVCSLAFLK. A helical transmembrane segment spans residues 13 to 33; sequence AVFAEFLATLIFVFFGLASAL. Topologically, residues 34–39 are extracellular; sequence KWPSAL. A helical transmembrane segment spans residues 40–60; it reads PTILQIALAFGLAIGTLAQAL. The Cytoplasmic portion of the chain corresponds to 61 to 65; that stretch reads GPVSG. Positions 66-74 form an intramembrane region, discontinuously helical; that stretch reads GHINPAITL. The NPA 1 signature appears at 69 to 71; sequence NPA. At 75-87 the chain is on the cytoplasmic side; that stretch reads ALLVGNQISLLRA. Residues 88–108 form a helical membrane-spanning segment; sequence VFYVVAQLVGAIAGAGILYGL. At 109-126 the chain is on the extracellular side; the sequence is APGNARGNLAVNSLNNNT. Asn124 carries an N-linked (GlcNAc...) asparagine glycan. The chain crosses the membrane as a helical span at residues 127–147; that stretch reads TPGQAVVVEMILTFQLALCIF. The Cytoplasmic segment spans residues 148–158; sequence SSTDSRRTSPV. A helical membrane pass occupies residues 159–179; sequence GSPALSIGLSVTLGHLVGIYF. Thr180 is a topological domain (extracellular). Residues 181–191 constitute an intramembrane region (discontinuously helical); it reads GCSMNPARSFG. Positions 185–187 match the NPA 2 motif; that stretch reads NPA. The Extracellular segment spans residues 192 to 203; it reads PAVVMNRFSPSH. The chain crosses the membrane as a helical span at residues 204 to 224; it reads WVFWVGPIVGAAVAAILYFYL. The Cytoplasmic segment spans residues 225–265; sequence LFPNSLSLSERVAVVKGTYESEEDWEEQREERKKTMELTAH.

The protein belongs to the MIP/aquaporin (TC 1.A.8) family. In terms of assembly, homotetramer; each monomer provides an independent water pore. Interacts with TRPV4; the interaction is probably indirect and regulates TRPV4 activation by hypotonicity.

It is found in the apical cell membrane. Its subcellular location is the cell membrane. The protein resides in the cytoplasmic vesicle membrane. The catalysed reaction is H2O(in) = H2O(out). Aquaporins form homotetrameric transmembrane channels, with each monomer independently mediating water transport across the plasma membrane along its osmotic gradient. Plays an important role in fluid secretion in salivary glands. Required for TRPV4 activation by hypotonicity. Together with TRPV4, controls regulatory volume decrease in salivary epithelial cells. Seems to play a redundant role in water transport in the eye, lung and in sweat glands. The sequence is that of Aquaporin-5 from Sus scrofa (Pig).